Consider the following 447-residue polypeptide: MGQTFHAFMFPWFAFGHMTPYLHLANKLAERGHRITFLIPKKAQKQLEHLNLFPDSIVFHSLTIPHVDGLPAGAETFSDIPMPLWKFLPPAIDLTRDQVEAAVSALSPDLILFDIASWVPEVAKEYRVKSMLYNIISATSIAHDFVPGGELGVPPPGYPSSKLLYRKHDAHALLSFSVYYKRFSHRLITGLMNCDFISIRTCKEIEGKFCEYLERQYHKKVFLTGPMLPEPNKGKPLEDRWSHWLNGFEQGSVVFCALGSQVTLEKDQFQELCLGIELTGLPFFVAVTPPKGAKTIQDALPEGFEERVKDRGVVLGEWVQQPLLLAHPSVGCFLSHCGFGSMWESIMSDCQIVLLPFLADQVLNTRLMTEELKVSVEVQREETGWFSKESLSVAITSVMDQASEIGNLVRRNHSKLKEVLVSDGLLTGYTDKFVDTLENLVSETKRE.

UDP-alpha-D-glucose contacts are provided by residues Ser260, 319-321 (VQQ), 336-344 (HCGFGSMWE), and 358-361 (LADQ).

Belongs to the UDP-glycosyltransferase family.

The protein is UDP-glycosyltransferase 79B10 (UGT79B10) of Arabidopsis thaliana (Mouse-ear cress).